A 1238-amino-acid polypeptide reads, in one-letter code: Cryptic loci regulator protein 1 (1238 aa).

Disordered regions lie at residues 133 to 156 (TQQQVSNVSHGNFKPNSSVNTEPN), 196 to 237 (PFSN…PSSI), 277 to 303 (ASLYDRSPSKKDITSSRNTSSYNLGSM), 546 to 568 (QKSVSSETTLVKPSSTSSYIDTT), 696 to 735 (SDNTDCSLPKPSNSKLSSISSDGDASSNRMAVPDKSPFVH), and 784 to 824 (TLKE…QSRS). The span at 214-223 (NVKNNSKKTA) shows a compositional bias: polar residues. The span at 224–237 (SSVNSNHSSIPSSI) shows a compositional bias: low complexity. Over residues 291 to 303 (SSRNTSSYNLGSM) the composition is skewed to polar residues. Residues 702-723 (SLPKPSNSKLSSISSDGDASSN) show a composition bias toward low complexity. Over residues 785–796 (LKEDASSTKQAK) the composition is skewed to basic and acidic residues. Polar residues predominate over residues 810 to 819 (NDVSKNNSGE). The C2H2-type zinc-finger motif lies at 1062 to 1087 (LNCEVSNCKKCFSNYEDMFKHLQHSH).

Interacts with clr3.

It is found in the nucleus. The protein localises to the chromosome. It localises to the centromere. The protein resides in the telomere. Functionally, regulates silencing of the mat2 and mat3 loci. Organizes the chromatin structure of the mating-type region where it also participates in establishing the 'cold spot' for recombination. Required for proper positioning of nucleosomes at heterochromatic loci and for transcriptional gene silencing (TGS) function of the Snf2/Hdac-containing repressor complex (SHREC). This Schizosaccharomyces pombe (strain 972 / ATCC 24843) (Fission yeast) protein is Cryptic loci regulator protein 1 (clr1).